A 207-amino-acid chain; its full sequence is Acyl-homoserine-lactone synthase (207 aa).

Belongs to the autoinducer synthase family.

It carries out the reaction a fatty acyl-[ACP] + S-adenosyl-L-methionine = an N-acyl-L-homoserine lactone + S-methyl-5'-thioadenosine + holo-[ACP] + H(+). Its function is as follows. Required for the synthesis of N-butanoyl-L-homoserine lactone (BHL), an autoinducer molecule which binds to AhyR. The protein is Acyl-homoserine-lactone synthase (ahyI) of Aeromonas hydrophila.